The chain runs to 82 residues: Small ribosomal subunit protein bS16 (82 aa).

Belongs to the bacterial ribosomal protein bS16 family.

The protein is Small ribosomal subunit protein bS16 of Clostridium botulinum (strain ATCC 19397 / Type A).